A 126-amino-acid chain; its full sequence is MIRTMLQGKLHRVKVTQADLHYEGSCAIDQDFLEAAGILEYEAIDIYNVTNGKRFSTYAIAGERGSKIISVNGAAAHCADVGDILIIASYVTMPDEQARSWQPKVAYFDGDNEMKRLAKAVPVQVA.

Serine 25 serves as the catalytic Schiff-base intermediate with substrate; via pyruvic acid. Position 25 is a pyruvic acid (Ser) (serine 25). A substrate-binding site is contributed by threonine 57. Tyrosine 58 (proton donor) is an active-site residue. 73-75 provides a ligand contact to substrate; that stretch reads GAA.

It belongs to the PanD family. In terms of assembly, heterooctamer of four alpha and four beta subunits. Pyruvate serves as cofactor. Is synthesized initially as an inactive proenzyme, which is activated by self-cleavage at a specific serine bond to produce a beta-subunit with a hydroxyl group at its C-terminus and an alpha-subunit with a pyruvoyl group at its N-terminus.

The protein localises to the cytoplasm. It catalyses the reaction L-aspartate + H(+) = beta-alanine + CO2. The protein operates within cofactor biosynthesis; (R)-pantothenate biosynthesis; beta-alanine from L-aspartate: step 1/1. Its function is as follows. Catalyzes the pyruvoyl-dependent decarboxylation of aspartate to produce beta-alanine. The chain is Aspartate 1-decarboxylase from Cronobacter sakazakii (strain ATCC BAA-894) (Enterobacter sakazakii).